Consider the following 248-residue polypeptide: Triosephosphate isomerase (248 aa).

Asn9 to Lys11 lines the substrate pocket. The active-site Electrophile is His94. Catalysis depends on Glu164, which acts as the Proton acceptor. Residues Gly170, Ser209, and Gly230–Gly231 each bind substrate.

It belongs to the triosephosphate isomerase family. As to quaternary structure, homodimer.

It is found in the cytoplasm. The enzyme catalyses D-glyceraldehyde 3-phosphate = dihydroxyacetone phosphate. It functions in the pathway carbohydrate biosynthesis; gluconeogenesis. It participates in carbohydrate degradation; glycolysis; D-glyceraldehyde 3-phosphate from glycerone phosphate: step 1/1. Involved in the gluconeogenesis. Catalyzes stereospecifically the conversion of dihydroxyacetone phosphate (DHAP) to D-glyceraldehyde-3-phosphate (G3P). This Hahella chejuensis (strain KCTC 2396) protein is Triosephosphate isomerase.